The primary structure comprises 82 residues: Small ribosomal subunit protein uS17 (82 aa).

Belongs to the universal ribosomal protein uS17 family. As to quaternary structure, part of the 30S ribosomal subunit.

One of the primary rRNA binding proteins, it binds specifically to the 5'-end of 16S ribosomal RNA. This Shewanella sp. (strain MR-7) protein is Small ribosomal subunit protein uS17.